A 358-amino-acid chain; its full sequence is UDP-N-acetylglucosamine--N-acetylmuramyl-(pentapeptide) pyrophosphoryl-undecaprenol N-acetylglucosamine transferase (358 aa).

UDP-N-acetyl-alpha-D-glucosamine-binding positions include T11–G13, N122, R161, S189, I243, A262–E267, and Q288.

The protein belongs to the glycosyltransferase 28 family. MurG subfamily.

The protein resides in the cell inner membrane. The enzyme catalyses di-trans,octa-cis-undecaprenyl diphospho-N-acetyl-alpha-D-muramoyl-L-alanyl-D-glutamyl-meso-2,6-diaminopimeloyl-D-alanyl-D-alanine + UDP-N-acetyl-alpha-D-glucosamine = di-trans,octa-cis-undecaprenyl diphospho-[N-acetyl-alpha-D-glucosaminyl-(1-&gt;4)]-N-acetyl-alpha-D-muramoyl-L-alanyl-D-glutamyl-meso-2,6-diaminopimeloyl-D-alanyl-D-alanine + UDP + H(+). It participates in cell wall biogenesis; peptidoglycan biosynthesis. Its function is as follows. Cell wall formation. Catalyzes the transfer of a GlcNAc subunit on undecaprenyl-pyrophosphoryl-MurNAc-pentapeptide (lipid intermediate I) to form undecaprenyl-pyrophosphoryl-MurNAc-(pentapeptide)GlcNAc (lipid intermediate II). The chain is UDP-N-acetylglucosamine--N-acetylmuramyl-(pentapeptide) pyrophosphoryl-undecaprenol N-acetylglucosamine transferase from Coxiella burnetii (strain CbuK_Q154) (Coxiella burnetii (strain Q154)).